Consider the following 193-residue polypeptide: Crossover junction endodeoxyribonuclease RuvC (193 aa).

Residues Asp7, Glu68, and Asp141 contribute to the active site. Residues Asp7, Glu68, and Asp141 each coordinate Mg(2+).

This sequence belongs to the RuvC family. As to quaternary structure, homodimer which binds Holliday junction (HJ) DNA. The HJ becomes 2-fold symmetrical on binding to RuvC with unstacked arms; it has a different conformation from HJ DNA in complex with RuvA. In the full resolvosome a probable DNA-RuvA(4)-RuvB(12)-RuvC(2) complex forms which resolves the HJ. The cofactor is Mg(2+).

The protein localises to the cytoplasm. The enzyme catalyses Endonucleolytic cleavage at a junction such as a reciprocal single-stranded crossover between two homologous DNA duplexes (Holliday junction).. In terms of biological role, the RuvA-RuvB-RuvC complex processes Holliday junction (HJ) DNA during genetic recombination and DNA repair. Endonuclease that resolves HJ intermediates. Cleaves cruciform DNA by making single-stranded nicks across the HJ at symmetrical positions within the homologous arms, yielding a 5'-phosphate and a 3'-hydroxyl group; requires a central core of homology in the junction. The consensus cleavage sequence is 5'-(A/T)TT(C/G)-3'. Cleavage occurs on the 3'-side of the TT dinucleotide at the point of strand exchange. HJ branch migration catalyzed by RuvA-RuvB allows RuvC to scan DNA until it finds its consensus sequence, where it cleaves and resolves the cruciform DNA. The polypeptide is Crossover junction endodeoxyribonuclease RuvC (Bifidobacterium adolescentis (strain ATCC 15703 / DSM 20083 / NCTC 11814 / E194a)).